The following is a 122-amino-acid chain: MVSFMTRLNVADNTGAKQVGIIKVLGSTRKRYAFLGDVVVVSVKDAIPSGMVKKGQVLRAVIVRTKKGQQRKDGTHLKFDDNACVLIKEDKSPRGTRIFGPVARELRERGYNKILSLAVEVV.

The protein belongs to the universal ribosomal protein uL14 family. As to quaternary structure, part of the 50S ribosomal subunit. Forms a cluster with proteins L3 and L19. In the 70S ribosome, L14 and L19 interact and together make contacts with the 16S rRNA in bridges B5 and B8.

Its function is as follows. Binds to 23S rRNA. Forms part of two intersubunit bridges in the 70S ribosome. The chain is Large ribosomal subunit protein uL14 from Mycoplasma pneumoniae (strain ATCC 29342 / M129 / Subtype 1) (Mycoplasmoides pneumoniae).